The sequence spans 341 residues: UDP-3-O-acylglucosamine N-acyltransferase (341 aa).

The active-site Proton acceptor is His239.

Belongs to the transferase hexapeptide repeat family. LpxD subfamily. As to quaternary structure, homotrimer.

The enzyme catalyses a UDP-3-O-[(3R)-3-hydroxyacyl]-alpha-D-glucosamine + a (3R)-hydroxyacyl-[ACP] = a UDP-2-N,3-O-bis[(3R)-3-hydroxyacyl]-alpha-D-glucosamine + holo-[ACP] + H(+). It participates in bacterial outer membrane biogenesis; LPS lipid A biosynthesis. Functionally, catalyzes the N-acylation of UDP-3-O-acylglucosamine using 3-hydroxyacyl-ACP as the acyl donor. Is involved in the biosynthesis of lipid A, a phosphorylated glycolipid that anchors the lipopolysaccharide to the outer membrane of the cell. This is UDP-3-O-acylglucosamine N-acyltransferase from Photobacterium profundum (strain SS9).